The primary structure comprises 245 residues: Terpene cyclase esdpB (245 aa).

7 consecutive transmembrane segments (helical) span residues 19 to 39 (MVASIFLISGTGWIVNYVTTI), 48 to 68 (SGVTLLSLCNNLAWETVFAVI), 75 to 95 (IAALVITVWLLVNIYVIYVSV), 112 to 132 (LPVVTLLGFVGFLTGHIALSM), 140 to 160 (LYWGGMICQVTLSASALGLLI), 177 to 197 (FIASSFGVPGLFVRAVYWPSA), and 208 to 228 (WLSGVFFLLDLSYGAIYYHIS).

Belongs to the paxB family.

It is found in the membrane. Its pathway is secondary metabolite biosynthesis; terpenoid biosynthesis. Functionally, terpene cyclase; part of the cluster that mediates the biosynthesis of shearones, diterpenoid pyrones (DPs) which are structurally diverse meroterpenoids consisting of a diterpene linked by a pyrone, and which may exhibit a range of bioactivities. Within the pathway, esdpB takes part to the biosynthesis of the molecular scaffold by catalyzing the cyclization of the prenyl group initiated by protonation and ring-opening of the epoxide to produce the diterpenoid pyrone scaffold. The molecular scaffold is commonly biosynthesized by a series of enzymes including the non-reducing polyketide synthase (NR-PKS) esdpA that generates an alpha-pyrone; the prenyltransferase esdpC that attaches a geranylgeranyl pyrophosphate (GGPP) produced by the GGPP synthase (GGPPS) esdpD onto the pyrone unit; the FAD-dependent monooxygenase esdpE that converts an olefin on the diterpene unit into an epoxide; and the terpene cyclase esdpB that catalyzes the cyclization reactions to give the molecular backbone shearone A. In the modification steps, esdpF oxidizes the hydroxy group to a ketone at C-3 and esdpG then attaches hydroxy groups at both C-11 and C-12. After that, esdpI hydroxylates at C-20 and esdpH hydroxylates at C-6'. The ether bridge is generated by nucleophilic attack of the hydroxy group at C-20 to the carbonyl carbon at C-3. EsdpH can also functions prior to esdpI. The different combinations of these modification enzymes lead to the production of diverse shearone derivatives, shearone I being the end product of the pathway. The alpha-ketoglutarate-dependent dioxygenase esdpJ seems not to be involved in this pathway. The chain is Terpene cyclase esdpB from Penicillium shearii (Eupenicillium shearii).